The following is a 352-amino-acid chain: Anthranilate phosphoribosyltransferase (352 aa).

Residues Gly-94, Gly-97 to Ser-98, Ser-102, Asn-104 to Thr-107, Lys-122 to Ser-130, and Ser-134 contribute to the 5-phospho-alpha-D-ribose 1-diphosphate site. An anthranilate-binding site is contributed by Gly-94. A Mg(2+)-binding site is contributed by Ser-106. Anthranilate is bound at residue Asn-125. Anthranilate is bound at residue Arg-180. Mg(2+)-binding residues include Asp-239 and Glu-240.

The protein belongs to the anthranilate phosphoribosyltransferase family. In terms of assembly, homodimer. Mg(2+) is required as a cofactor.

The enzyme catalyses N-(5-phospho-beta-D-ribosyl)anthranilate + diphosphate = 5-phospho-alpha-D-ribose 1-diphosphate + anthranilate. The protein operates within amino-acid biosynthesis; L-tryptophan biosynthesis; L-tryptophan from chorismate: step 2/5. Catalyzes the transfer of the phosphoribosyl group of 5-phosphorylribose-1-pyrophosphate (PRPP) to anthranilate to yield N-(5'-phosphoribosyl)-anthranilate (PRA). This is Anthranilate phosphoribosyltransferase from Citrifermentans bemidjiense (strain ATCC BAA-1014 / DSM 16622 / JCM 12645 / Bem) (Geobacter bemidjiensis).